A 422-amino-acid polypeptide reads, in one-letter code: Immunoglobulin mu Fc receptor (422 aa).

A signal peptide spans 1-16 (MDFWLWLLYFLPVSGA). At 18–262 (RVLPEVQLNV…DRGLHIPIPE (245 aa)) the chain is on the extracellular side. Residues 24 to 121 (QLNVEWGGSI…GKTQKITLNV (98 aa)) enclose the Ig-like domain. Cystine bridges form between Cys37–Cys103 and Cys49–Cys58. Position 91 is a phosphothreonine (Thr91). A helical transmembrane segment spans residues 263–283 (FHILIPTFLGFLLLVLLGLVV). Topologically, residues 284–422 (KRAIQRRRAS…YAPGPRSSCP (139 aa)) are cytoplasmic. Residues 290 to 308 (RRASSRRAGRLAMRRRGRG) show a composition bias toward basic residues. Disordered stretches follow at residues 290–367 (RRAS…QVLE) and 391–422 (VNLEDPDSDDYINIPDPSHLPSYAPGPRSSCP). Residues 344-363 (LGPAEAPLLNAPASASPASP) are compositionally biased toward low complexity.

As to quaternary structure, interacts (via Ig-like domain) with IGHM (via CH4/Cmu4 domain), both secreted and membrane-bound IgM; the interaction is glycan-independent and multivalent theoretically involving up to eight binding sites for the IgM pentamer. In terms of processing, phosphorylated on both Tyr and Ser residues. Post-translationally, O-glycosylated. Sialylated. O-linked glycans regulate trafficking to the plasma membrane. As to expression, expressed in pre-B cells, immature and mature B cells residing in primary and secondary lymphoid organs (at protein level). In the spleen, highly expressed in follicular and marginal zone B cells and at lower levels in germinal center B cells and plasma cells. Expressed in splenic dendritic cells and in granulocytes. In the peritoneum, expressed in B1-a and B-2 cell lineages. In the bone marrow, expressed in immature B cells and at a lower level in pro- and pre-B cells (at protein level). Expressed in M cells (at protein level).

It localises to the cell membrane. The protein localises to the early endosome membrane. The protein resides in the golgi apparatus. Its subcellular location is the trans-Golgi network membrane. It is found in the lysosome membrane. Functionally, high-affinity Fc receptor for immunoglobulin M (IgM), both secreted and membrane-bound IgM. Primarily regulates IgM transport and homeostasis. In lymphoid cells, enables exocytosis of membrane-bound IgM on the plasma membrane as well as endocytosis of IgM-antigen complexes toward lysosomes for degradation. In mucosal epithelium, mediates retrotranscytosis of antigen-IgM complexes across mucosal M cells toward antigen-presenting cells in mucosal lymphoid tissues. Triggers costimulatory signaling and mediates most of IgM effector functions involved in B cell development and primary immune response to infection. Likely limits tonic IgM BCR signaling to self-antigens for proper negative selection of autoreactive B cells in the bone marrow and for the maintenance of regulatory B cell pool in peripheral lymphoid organs. Mediates antibody responses to T cell-dependent and T cell-independent antigens and promotes induction of an efficient neutralizing IgG response. Engages in cross-talk with antigen-receptor signaling via the non-canonical NF-kappa-B, MAP kinases and calcium signaling pathways. This Mus musculus (Mouse) protein is Immunoglobulin mu Fc receptor.